A 200-amino-acid polypeptide reads, in one-letter code: Prolactin (200 aa).

Disulfide bonds link cysteine 4/cysteine 11, cysteine 59/cysteine 175, and cysteine 192/cysteine 200.

It belongs to the somatotropin/prolactin family. As to expression, pituitary gland.

The protein localises to the secreted. The chain is Prolactin (prl) from Protopterus aethiopicus (Marbled lungfish).